We begin with the raw amino-acid sequence, 718 residues long: Exostosin-2 (718 aa).

The Cytoplasmic portion of the chain corresponds to 1–25 (MCASVKSNIRGPALIPRMKTKHRIY). Residues 26-46 (YVTLFSIVLLGLIATGMFQFW) form a helical; Signal-anchor for type II membrane protein membrane-spanning segment. Residues 47–718 (PHSIESSSDG…LKSFPNIGSL (672 aa)) lie on the Lumenal side of the membrane. Intrachain disulfides connect C85-C90, C96-C151, C286-C300, and C318-C339. An N-linked (GlcNAc...) asparagine glycan is attached at N288. Residues L461, R465, N490, and N517 each contribute to the UDP site. R465, N490, N517, R522, D538, D539, and D540 together coordinate UDP-N-acetyl-alpha-D-glucosamine. 2 residues coordinate UDP: D538 and D539. D540 is a Mn(2+) binding site. Residues Y582 and S584 each coordinate a protein. A disulfide bond links C626 and C676. The UDP-N-acetyl-alpha-D-glucosamine site is built by E627 and D628. N637 carries N-linked (GlcNAc...) asparagine glycosylation. K651 and K653 together coordinate a protein. UDP-N-acetyl-alpha-D-glucosamine is bound at residue R673.

Belongs to the glycosyltransferase 47 family. In terms of assembly, part of the heparan sulfate polymerase, a dimeric complex composed of EXT1 and EXT2. Could also form homooligomeric complexes. Interacts with NDST1. Interacts with GALNT5. The cofactor is Mn(2+). N-glycosylated at Asn-637. In terms of processing, a soluble form is generated by proteolytic processing. In terms of tissue distribution, expressed in heart, brain, spleen, lung, liver, skeletal muscle and testis. Heart shows a high expression.

It is found in the golgi apparatus membrane. The protein localises to the golgi apparatus. It localises to the cis-Golgi network membrane. The protein resides in the endoplasmic reticulum membrane. Its subcellular location is the secreted. The catalysed reaction is 3-O-{[(1-&gt;4)-beta-D-GlcA-(1-&gt;4)-alpha-D-GlcNAc](n)-(1-&gt;4)-beta-D-GlcA-(1-&gt;3)-beta-D-Gal-(1-&gt;3)-beta-D-Gal-(1-&gt;4)-beta-D-Xyl}-L-seryl-[protein] + UDP-N-acetyl-alpha-D-glucosamine = 3-O-{alpha-D-GlcNAc-[(1-&gt;4)-beta-D-GlcA-(1-&gt;4)-alpha-D-GlcNAc](n)-(1-&gt;4)-beta-D-GlcA-(1-&gt;3)-beta-D-Gal-(1-&gt;3)-beta-D-Gal-(1-&gt;4)-beta-D-Xyl}-L-seryl-[protein] + UDP + H(+). It functions in the pathway protein modification; protein glycosylation. Its function is as follows. Glycosyltransferase forming with EXT1 the heterodimeric heparan sulfate polymerase which catalyzes the elongation of the heparan sulfate glycan backbone. Glycan backbone extension consists in the alternating transfer of (1-&gt;4)-beta-D-GlcA and (1-&gt;4)-alpha-D-GlcNAc residues from their respective UDP-sugar donors. Both EXT1 and EXT2 are required for the full activity of the polymerase since EXT1 bears the N-acetylglucosaminyl-proteoglycan 4-beta-glucuronosyltransferase activity within the complex while EXT2 carries the glucuronosyl-N-acetylglucosaminyl-proteoglycan 4-alpha-N-acetylglucosaminyltransferase activity. Heparan sulfate proteoglycans are ubiquitous components of the extracellular matrix and play an important role in tissue homeostasis and signaling. The sequence is that of Exostosin-2 from Mus musculus (Mouse).